We begin with the raw amino-acid sequence, 107 residues long: Thioredoxin 1 (107 aa).

Positions 2 to 107 constitute a Thioredoxin domain; sequence SAAAQVTDST…TLSQTLEKHL (106 aa). An intrachain disulfide couples Cys32 to Cys35.

The protein belongs to the thioredoxin family.

In terms of biological role, participates in various redox reactions through the reversible oxidation of its active center dithiol to a disulfide and catalyzes dithiol-disulfide exchange reactions. In Nostoc sp. (strain PCC 7120 / SAG 25.82 / UTEX 2576), this protein is Thioredoxin 1 (trxA).